The chain runs to 209 residues: Large ribosomal subunit protein uL3 (209 aa).

A disordered region spans residues 118-150 (GFQGAIKRHGQSRGPMTHGSRYHRRPGSMGPVD).

It belongs to the universal ribosomal protein uL3 family. Part of the 50S ribosomal subunit. Forms a cluster with proteins L14 and L19.

Its function is as follows. One of the primary rRNA binding proteins, it binds directly near the 3'-end of the 23S rRNA, where it nucleates assembly of the 50S subunit. The polypeptide is Large ribosomal subunit protein uL3 (Bacillus pumilus (strain SAFR-032)).